The chain runs to 398 residues: Ribosomal RNA large subunit methyltransferase I (398 aa).

The 78-residue stretch at 2 to 79 folds into the PUA domain; it reads SVRLVLAKGR…LSESIDIAFF (78 aa).

Belongs to the methyltransferase superfamily. RlmI family.

The protein localises to the cytoplasm. The catalysed reaction is cytidine(1962) in 23S rRNA + S-adenosyl-L-methionine = 5-methylcytidine(1962) in 23S rRNA + S-adenosyl-L-homocysteine + H(+). In terms of biological role, specifically methylates the cytosine at position 1962 (m5C1962) of 23S rRNA. This Shigella dysenteriae serotype 1 (strain Sd197) protein is Ribosomal RNA large subunit methyltransferase I.